The sequence spans 335 residues: POU domain, class 5, transcription factor 2 (335 aa).

The interval 1-23 (MAGRRSSNVCPFPGNSGGGLEGP) is disordered. Residues 113–187 (DVSAIQKEME…LLKMWLEEVD (75 aa)) form the POU-specific domain. Positions 205 to 264 (RKRRRASRERRIGSNLEKLFLQCPEPTPQQISYIAGRLRLQKDLVQVWFSNRSQMAGWPT) form a DNA-binding region, homeobox.

The protein belongs to the POU transcription factor family. Class-5 subfamily. As to expression, highly restricted to adult testis.

The protein localises to the nucleus. In terms of biological role, transcription factor that binds preferentially to the octamer motif (5'-ATGTTAAT-3'). May exert a regulatory function in meiotic events that are required for terminal differentiation of male germ cell. The sequence is that of POU domain, class 5, transcription factor 2 (Pou5f2) from Rattus norvegicus (Rat).